Reading from the N-terminus, the 576-residue chain is uncharacterized protein (576 aa).

The segment at 41–78 (EKESESKLNSKSTTLQSSDSEDWDSEENEDDITDVGVP) is disordered. A compositionally biased stretch (low complexity) spans 49–58 (NSKSTTLQSS). The span at 59-73 (DSEDWDSEENEDDIT) shows a compositional bias: acidic residues. WD repeat units follow at residues 87-126 (GHSKIVTTTTFDKNGSRFYTGSLDNTIHCWDLNGLSATNP), 195-235 (GHIA…SQLE), 248-288 (LSRI…KRPV), 296-335 (LPQQGISCLSFSQDGNYLLSRGEDNALRVWDLRNSNKCVN), and 393-433 (TVTA…RGVK). The tract at residues 547 to 576 (SETQPTPIYQGVTEGDISSEEGNPSKKQKR) is disordered.

This is an uncharacterized protein from Schizosaccharomyces pombe (strain 972 / ATCC 24843) (Fission yeast).